The chain runs to 259 residues: Cytosolic Fe-S cluster assembly factor Nubp2 homolog (259 aa).

14–21 (GKGGVGKS) lines the ATP pocket. [4Fe-4S] cluster-binding residues include cysteine 188 and cysteine 191.

The protein belongs to the Mrp/NBP35 ATP-binding proteins family. NUBP2/CFD1 subfamily. As to quaternary structure, heterotetramer of 2 Nubp1 and 2 Nubp2 chains. It depends on [4Fe-4S] cluster as a cofactor.

It is found in the cytoplasm. Its function is as follows. Component of the cytosolic iron-sulfur (Fe/S) protein assembly (CIA) machinery. Required for maturation of extramitochondrial Fe-S proteins. The Nubp1-Nubp2 heterotetramer forms a Fe-S scaffold complex, mediating the de novo assembly of an Fe-S cluster and its transfer to target apoproteins. In Aedes aegypti (Yellowfever mosquito), this protein is Cytosolic Fe-S cluster assembly factor Nubp2 homolog.